A 309-amino-acid chain; its full sequence is Protein RTM1 (309 aa).

Helical transmembrane passes span 22–42, 83–103, 119–139, 162–182, 193–213, 233–253, and 278–298; these read AIALTVLFIVTTLIYSLQVVW, TFSAFIPLFFGCIMEIVGYIA, IQAVLLLIAPALYAATIYMLF, FFVFGDVVSFCLQAAGGGLMA, LITAGLVIQIVFFGVFIINEF, WWFLNLTLMLSSILIMVRSIV, and AVPMLLAAIVFIVGSFFGNIF.

The protein belongs to the lipid-translocating exporter (LTE) (TC 9.A.26.1) family.

The protein localises to the membrane. In terms of biological role, confers resistance to molasses (to a particular toxic element present in some molasses). The chain is Protein RTM1 (RTM1) from Saccharomyces cerevisiae (Baker's yeast).